Consider the following 737-residue polypeptide: Catalase-peroxidase (737 aa).

A signal peptide spans 1–23 (MLKKILPVLITLAIVHNTPTAWA). Residues 102–223 (WHGAGTYRIY…LAATQMGLIY (122 aa)) constitute a cross-link (tryptophyl-tyrosyl-methioninium (Trp-Tyr) (with M-249)). His103 acts as the Proton acceptor in catalysis. Positions 223 to 249 (YVNPEGPNGKPDPVAAAKDIREAFARM) form a cross-link, tryptophyl-tyrosyl-methioninium (Tyr-Met) (with W-102). A heme b-binding site is contributed by His264.

This sequence belongs to the peroxidase family. Peroxidase/catalase subfamily. Homodimer or homotetramer. Requires heme b as cofactor. Post-translationally, formation of the three residue Trp-Tyr-Met cross-link is important for the catalase, but not the peroxidase activity of the enzyme.

The catalysed reaction is H2O2 + AH2 = A + 2 H2O. It catalyses the reaction 2 H2O2 = O2 + 2 H2O. Its function is as follows. Bifunctional enzyme with both catalase and broad-spectrum peroxidase activity. This chain is Catalase-peroxidase, found in Yersinia pseudotuberculosis serotype O:3 (strain YPIII).